Here is a 205-residue protein sequence, read N- to C-terminus: Probable anaerobic dimethyl sulfoxide reductase chain YnfG (205 aa).

3 consecutive 4Fe-4S ferredoxin-type domains span residues 5-33 (YGFF…LGPE), 59-89 (FAYY…KRED), and 90-119 (GFVV…YNAE). [4Fe-4S] cluster contacts are provided by Cys-14, Cys-17, Cys-20, Cys-24, Cys-67, Cys-70, Cys-75, Cys-79, Cys-99, Cys-102, Cys-105, Cys-109, Cys-126, Cys-129, Cys-141, and Cys-145. The disordered stretch occupies residues 183-205 (IKPNANSRPTGDTTGYLANPEEV). Residues 186–195 (NANSRPTGDT) are compositionally biased toward polar residues.

The complex consists of three subunits: YnfF, the reductase; YnfG, an electron transfer protein, and YnfH, a membrane anchor protein. [4Fe-4S] cluster serves as cofactor.

Functionally, electron transfer subunit of the terminal reductase during anaerobic growth on various sulfoxide and N-oxide compounds. The sequence is that of Probable anaerobic dimethyl sulfoxide reductase chain YnfG (ynfG) from Escherichia coli O6:H1 (strain CFT073 / ATCC 700928 / UPEC).